A 387-amino-acid polypeptide reads, in one-letter code: Lactosylceramide alpha-2,3-sialyltransferase (387 aa).

The Cytoplasmic segment spans residues Met-1–Ser-33. Residues Leu-34 to Ile-54 form a helical; Signal-anchor for type II membrane protein membrane-spanning segment. Topologically, residues Leu-55–His-387 are extracellular. 2 N-linked (GlcNAc...) asparagine glycosylation sites follow: Asn-58 and Asn-208. Cys-167 and Cys-325 form a disulfide bridge.

Belongs to the glycosyltransferase 29 family.

Its subcellular location is the golgi apparatus membrane. The catalysed reaction is a beta-D-Gal-(1-&gt;4)-beta-D-Glc-(1&lt;-&gt;1)-Cer(d18:1(4E)) + CMP-N-acetyl-beta-neuraminate = a ganglioside GM3 (d18:1(4E)) + CMP + H(+). It catalyses the reaction ganglioside GA2 (d18:1(4E)/18:0) + CMP-N-acetyl-beta-neuraminate = ganglioside GM2 (d18:1(4E)/18:0) + CMP + H(+). The enzyme catalyses a beta-D-Gal-(1&lt;-&gt;1')-ceramide + CMP-N-acetyl-beta-neuraminate = N-acetyl-alpha-neuraminosyl-(2-&gt;3)-beta-D-galactosyl-(1&lt;-&gt;1')-ceramide + CMP + H(+). It carries out the reaction ganglioside GA1 (d18:1(4E)/18:0) + CMP-N-acetyl-beta-neuraminate = ganglioside GM1 (d18:1(4E)/18:0) + CMP + H(+). Its function is as follows. Transfers the sialyl group (N-acetyl-alpha-neuraminyl or NeuAc) from CMP-NeuAc to the non-reducing terminal galactose (Gal) of glycosphingolipids forming gangliosides (important molecules involved in the regulation of multiple cellular processes, including cell proliferation and differentiation, apoptosis, embryogenesis, development, and oncogenesis). Mainly involved in the biosynthesis of ganglioside GM3 but can also use different glycolipids as substrate acceptors such as D-galactosylceramide (GalCer), asialo-GM2 (GA2) and asialo-GM1 (GA1), although less preferentially than beta-D-Gal-(1-&gt;4)-beta-D-Glc-(1&lt;-&gt;1)-Cer (LacCer). The sequence is that of Lactosylceramide alpha-2,3-sialyltransferase (St3gal5) from Rattus norvegicus (Rat).